Here is a 357-residue protein sequence, read N- to C-terminus: 3-dehydroquinate synthase (357 aa).

NAD(+) is bound by residues 69–74 (DGEKNK), 103–107 (GVIGD), 127–128 (TT), Lys140, and Lys149. The Zn(2+) site is built by Glu182, His245, and His262.

Belongs to the sugar phosphate cyclases superfamily. Dehydroquinate synthase family. Co(2+) serves as cofactor. The cofactor is Zn(2+). Requires NAD(+) as cofactor.

It localises to the cytoplasm. The enzyme catalyses 7-phospho-2-dehydro-3-deoxy-D-arabino-heptonate = 3-dehydroquinate + phosphate. It functions in the pathway metabolic intermediate biosynthesis; chorismate biosynthesis; chorismate from D-erythrose 4-phosphate and phosphoenolpyruvate: step 2/7. Its function is as follows. Catalyzes the conversion of 3-deoxy-D-arabino-heptulosonate 7-phosphate (DAHP) to dehydroquinate (DHQ). This Shewanella denitrificans (strain OS217 / ATCC BAA-1090 / DSM 15013) protein is 3-dehydroquinate synthase.